The chain runs to 105 residues: Large ribosomal subunit protein bL21 (105 aa).

It belongs to the bacterial ribosomal protein bL21 family. In terms of assembly, part of the 50S ribosomal subunit. Contacts protein L20.

This protein binds to 23S rRNA in the presence of protein L20. The protein is Large ribosomal subunit protein bL21 of Rickettsia typhi (strain ATCC VR-144 / Wilmington).